The following is a 501-amino-acid chain: Adenylosuccinate synthetase 2, chloroplastic (501 aa).

Residues 87-93 (GDEGKGK) and 115-117 (GHT) contribute to the GTP site. D88 acts as the Proton acceptor in catalysis. Mg(2+) is bound by residues D88 and G115. Residues 88-91 (DEGK), 113-116 (NAGH), T205, R219, Q300, T315, and R379 each bind IMP. H116 serves as the catalytic Proton donor. 375–381 (NITGRPR) is a substrate binding site. Residues R381, 407-409 (KLD), and 490-492 (GIG) each bind GTP.

The protein belongs to the adenylosuccinate synthetase family. Homodimer. Requires Mg(2+) as cofactor.

The protein resides in the plastid. It localises to the chloroplast. It carries out the reaction IMP + L-aspartate + GTP = N(6)-(1,2-dicarboxyethyl)-AMP + GDP + phosphate + 2 H(+). Its pathway is purine metabolism; AMP biosynthesis via de novo pathway; AMP from IMP: step 1/2. Plays an important role in the de novo pathway and in the salvage pathway of purine nucleotide biosynthesis. Catalyzes the first committed step in the biosynthesis of AMP from IMP. The chain is Adenylosuccinate synthetase 2, chloroplastic from Capsicum frutescens (Cayenne pepper).